A 688-amino-acid chain; its full sequence is Translation initiation factor IF-2 (688 aa).

Positions 50–62 (LLSGKEKSEKTKE) are enriched in basic and acidic residues. Positions 50–95 (LLSGKEKSEKTKEEDDEIETTAKNPIKESINNKKSNKRDDKNEKVN) are disordered. Over residues 72 to 82 (KNPIKESINNK) the composition is skewed to low complexity. The span at 86–95 (KRDDKNEKVN) shows a compositional bias: basic and acidic residues. The tr-type G domain occupies 187–354 (KRSPIITVMG…MILLSSEILE (168 aa)). A G1 region spans residues 196–203 (GHVDHGKT). 196–203 (GHVDHGKT) contributes to the GTP binding site. Residues 221 to 225 (GITQH) form a G2 region. The G3 stretch occupies residues 242–245 (DTPG). GTP is bound by residues 242–246 (DTPGH) and 296–299 (NKID). Positions 296–299 (NKID) are G4. Residues 332–334 (SAH) form a G5 region.

Belongs to the TRAFAC class translation factor GTPase superfamily. Classic translation factor GTPase family. IF-2 subfamily.

The protein localises to the cytoplasm. Its function is as follows. One of the essential components for the initiation of protein synthesis. Protects formylmethionyl-tRNA from spontaneous hydrolysis and promotes its binding to the 30S ribosomal subunits. Also involved in the hydrolysis of GTP during the formation of the 70S ribosomal complex. The protein is Translation initiation factor IF-2 of Clostridium botulinum (strain Langeland / NCTC 10281 / Type F).